Consider the following 340-residue polypeptide: UPF0324 membrane protein BC_5174 (340 aa).

10 helical membrane-spanning segments follow: residues 13–35 (FGFS…LAEL), 40–59 (IMGQ…AAIG), 99–118 (VLVI…YGLT), 128–150 (GILT…APQV), 157–179 (TAVG…TLLY), 189–211 (YGVF…APGG), 218–240 (AVIV…GLWF), 255–277 (LPIP…GIIP), 279–301 (VVAG…GLGL), and 316–338 (FVAG…YALG).

It belongs to the UPF0324 family.

The protein resides in the cell membrane. This is UPF0324 membrane protein BC_5174 from Bacillus cereus (strain ATCC 14579 / DSM 31 / CCUG 7414 / JCM 2152 / NBRC 15305 / NCIMB 9373 / NCTC 2599 / NRRL B-3711).